A 195-amino-acid polypeptide reads, in one-letter code: IMP cyclohydrolase (195 aa).

It belongs to the archaeal IMP cyclohydrolase family.

It carries out the reaction IMP + H2O = 5-formamido-1-(5-phospho-D-ribosyl)imidazole-4-carboxamide. It participates in purine metabolism; IMP biosynthesis via de novo pathway; IMP from 5-formamido-1-(5-phospho-D-ribosyl)imidazole-4-carboxamide: step 1/1. Its function is as follows. Catalyzes the cyclization of 5-formylamidoimidazole-4-carboxamide ribonucleotide to IMP. The sequence is that of IMP cyclohydrolase from Haloquadratum walsbyi (strain DSM 16790 / HBSQ001).